The sequence spans 139 residues: Aspartate 1-decarboxylase (139 aa).

Residue Ser25 is the Schiff-base intermediate with substrate; via pyruvic acid of the active site. Ser25 carries the pyruvic acid (Ser) modification. Residue Thr57 coordinates substrate. Tyr58 (proton donor) is an active-site residue. Residue 73-75 (GAA) coordinates substrate. Residues 117-139 (TGSDPADAPAGSGLLRGDRPAGR) are disordered.

The protein belongs to the PanD family. Heterooctamer of four alpha and four beta subunits. It depends on pyruvate as a cofactor. Is synthesized initially as an inactive proenzyme, which is activated by self-cleavage at a specific serine bond to produce a beta-subunit with a hydroxyl group at its C-terminus and an alpha-subunit with a pyruvoyl group at its N-terminus.

It localises to the cytoplasm. The catalysed reaction is L-aspartate + H(+) = beta-alanine + CO2. It participates in cofactor biosynthesis; (R)-pantothenate biosynthesis; beta-alanine from L-aspartate: step 1/1. In terms of biological role, catalyzes the pyruvoyl-dependent decarboxylation of aspartate to produce beta-alanine. The chain is Aspartate 1-decarboxylase from Nocardioides sp. (strain ATCC BAA-499 / JS614).